A 713-amino-acid polypeptide reads, in one-letter code: Macrophage-expressed gene 1 protein (713 aa).

Residues 1–19 form the signal peptide; the sequence is MNSFMALVLIWMIIACAEA. Positions 30-345 constitute an MACPF domain; that stretch reads GFQICKNALK…TAVRHYYTFN (316 aa). Residues cysteine 34 and cysteine 70 are joined by a disulfide bond. Transmembrane regions (beta stranded) follow at residues 113–120 and 127–132; these read LSINTELA and GKFSTE. Residue asparagine 185 is glycosylated (N-linked (GlcNAc...) asparagine). 2 beta stranded membrane passes run 235 to 244 and 248 to 256; these read TVTASAGIAF and VNFKVETDY. Asparagine 269 is a glycosylation site (N-linked (GlcNAc...) asparagine). An intrachain disulfide couples cysteine 350 to cysteine 369. Residue asparagine 375 is glycosylated (N-linked (GlcNAc...) asparagine). 5 disulfide bridges follow: cysteine 385-cysteine 394, cysteine 432-cysteine 446, cysteine 436-cysteine 442, cysteine 531-cysteine 569, and cysteine 554-cysteine 574. Positions 410–653 are P2; that stretch reads PPGYSPVHLL…GDSNGMSGGE (244 aa). The chain crosses the membrane as a helical span at residues 654 to 674; sequence AAGITLGVTIALGIVITLAIY.

The protein belongs to the MPEG1 family. As to quaternary structure, homooligomer; predominantly forms a homooligomeric arc-shaped pore complex instead of complete rings of 16 subunits. Post-translationally, proteolytically processed in two steps to generate the Macrophage-expressed gene 1 protein, processed form: cleaved by trypsin in proximity of the helical transmembrane domain releases the ectodomain into the lysosomal lumen to orient the pore-forming domain toward the endogenous membranes, and processed by the asparagine endopeptidase (LGMN). Proteolytic processing in antigen-containing vesicles is pH-dependent. Monoubiquitinated in response to bacterial infection; ubiquitination is required for vesicular localization and antibacterial activity and can be blocked by bacterial cell cycle inhibiting factor (cif). In terms of tissue distribution, expressed constitutively in a variety of cell types including macrophages, microglia, neutrophils, T cells, marginal zone B cells, keratinocytes, splenocytes and intestinal epithelial cells.

Its subcellular location is the cytoplasmic vesicle membrane. It localises to the cytoplasmic vesicle. The protein resides in the phagosome membrane. Forms arc- and ring-shaped pre-pores on top of the membrane at neutral to slightly acidic pH conditions and converts to pores upon acidification. Undergoes transition from the pre-pore to the pore in a processive clockwise hand-over-hand process. In the pore state, 2 alpha-helical regions refold into transmembrane hairpins (TMH1 and TMH2) in each protomer that form in the ensemble complex giant beta-barrel transmembrane pores. Pore-forming protein involved in both innate and adaptive immunity. Plays a central role in antigen cross-presentation in dendritic cells by forming a pore in antigen-containing compartments, thereby promoting delivery of antigens for cross-presentation. Also involved in innate immune response following bacterial infection; shows antibacterial activity against a wide spectrum of Gram-positive, Gram-negative and acid-fast bacteria. Reduces the viability of the intracytosolic pathogen L.monocytogenes by inhibiting acidification of the phagocytic vacuole of host cells which restricts bacterial translocation from the vacuole to the cytosol. Required for the antibacterial activity of reactive oxygen species and nitric oxide. In terms of biological role, pore-forming protein that plays a central role in antigen cross-presentation in dendritic cells by mediating delivery of antigens for cross-presentation. Dendritic cells bridge innate and adaptive immunity by capturing exogenous antigens on MHC class-I molecules and presenting them to naive CD8(+) T-cells. Acts by forming a pore in antigen-containing compartments, promoting the release of antigens into the cytosol, enabling generation of MHCI:peptide complexes and T-cell priming. The chain is Macrophage-expressed gene 1 protein from Mus musculus (Mouse).